A 220-amino-acid polypeptide reads, in one-letter code: Pyridoxine/pyridoxamine 5'-phosphate oxidase (220 aa).

Substrate contacts are provided by residues arginine 8–tyrosine 11 and lysine 66. Residues arginine 61–lysine 66, phenylalanine 76–threonine 77, arginine 82, and lysine 83 each bind FMN. Tyrosine 123, arginine 127, and serine 131 together coordinate substrate. FMN is bound by residues glutamine 140–serine 141 and tryptophan 184. Arginine 190–histidine 192 contacts substrate. Arginine 194 contacts FMN.

It belongs to the pyridoxamine 5'-phosphate oxidase family. As to quaternary structure, homodimer. FMN is required as a cofactor.

The catalysed reaction is pyridoxamine 5'-phosphate + O2 + H2O = pyridoxal 5'-phosphate + H2O2 + NH4(+). It carries out the reaction pyridoxine 5'-phosphate + O2 = pyridoxal 5'-phosphate + H2O2. The protein operates within cofactor metabolism; pyridoxal 5'-phosphate salvage; pyridoxal 5'-phosphate from pyridoxamine 5'-phosphate: step 1/1. Its pathway is cofactor metabolism; pyridoxal 5'-phosphate salvage; pyridoxal 5'-phosphate from pyridoxine 5'-phosphate: step 1/1. In terms of biological role, catalyzes the oxidation of either pyridoxine 5'-phosphate (PNP) or pyridoxamine 5'-phosphate (PMP) into pyridoxal 5'-phosphate (PLP). In Albidiferax ferrireducens (strain ATCC BAA-621 / DSM 15236 / T118) (Rhodoferax ferrireducens), this protein is Pyridoxine/pyridoxamine 5'-phosphate oxidase.